We begin with the raw amino-acid sequence, 61 residues long: Large ribosomal subunit protein bL28 (61 aa).

It belongs to the bacterial ribosomal protein bL28 family.

The chain is Large ribosomal subunit protein bL28 (rpmB) from Geobacillus stearothermophilus (Bacillus stearothermophilus).